Reading from the N-terminus, the 539-residue chain is Hydroxylamine reductase (539 aa).

Residues C3, C6, C13, and C19 each coordinate [4Fe-4S] cluster. Residues H240, E264, C308, C395, C423, C448, E482, and K484 each contribute to the hybrid [4Fe-2O-2S] cluster site. A Cysteine persulfide modification is found at C395.

This sequence belongs to the HCP family. [4Fe-4S] cluster serves as cofactor. The cofactor is hybrid [4Fe-2O-2S] cluster.

It localises to the cytoplasm. It carries out the reaction A + NH4(+) + H2O = hydroxylamine + AH2 + H(+). Catalyzes the reduction of hydroxylamine to form NH(3) and H(2)O. In Thermodesulfovibrio yellowstonii (strain ATCC 51303 / DSM 11347 / YP87), this protein is Hydroxylamine reductase.